The chain runs to 407 residues: Arginine deiminase (407 aa).

C397 (amidino-cysteine intermediate) is an active-site residue.

This sequence belongs to the arginine deiminase family.

The protein resides in the cytoplasm. The enzyme catalyses L-arginine + H2O = L-citrulline + NH4(+). It functions in the pathway amino-acid degradation; L-arginine degradation via ADI pathway; carbamoyl phosphate from L-arginine: step 1/2. The polypeptide is Arginine deiminase (Vibrio parahaemolyticus serotype O3:K6 (strain RIMD 2210633)).